The following is a 200-amino-acid chain: Cysteine dioxygenase type 1 (200 aa).

Positions 86, 88, and 140 each coordinate Fe cation. The segment at residues 93–157 (CFLKMLQGNL…TEPAVSLHLY (65 aa)) is a cross-link (3'-(S-cysteinyl)-tyrosine (Cys-Tyr)).

Belongs to the cysteine dioxygenase family. Monomer. It depends on Fe cation as a cofactor. The cofactor is Ni(2+). Zn(2+) is required as a cofactor. Post-translationally, the thioether cross-link between Cys-93 and Tyr-157 plays a structural role through stabilizing the Fe(2+) ion, and prevents the production of highly damaging free hydroxyl radicals by holding the oxygen radical via hydroxyl hydrogen.

The catalysed reaction is L-cysteine + O2 = 3-sulfino-L-alanine + H(+). It functions in the pathway organosulfur biosynthesis; taurine biosynthesis; hypotaurine from L-cysteine: step 1/2. Catalyzes the oxidation of cysteine to cysteine sulfinic acid with addition of molecular dioxygen. The protein is Cysteine dioxygenase type 1 (CDO1) of Bos taurus (Bovine).